The primary structure comprises 309 residues: tRNA dimethylallyltransferase (309 aa).

11 to 18 contributes to the ATP binding site; that stretch reads GPTASGKS. Substrate is bound at residue 13 to 18; sequence TASGKS. 2 interaction with substrate tRNA regions span residues 36 to 39 and 160 to 164; these read DSMQ and QRLLR.

The protein belongs to the IPP transferase family. Monomer. Mg(2+) is required as a cofactor.

The catalysed reaction is adenosine(37) in tRNA + dimethylallyl diphosphate = N(6)-dimethylallyladenosine(37) in tRNA + diphosphate. In terms of biological role, catalyzes the transfer of a dimethylallyl group onto the adenine at position 37 in tRNAs that read codons beginning with uridine, leading to the formation of N6-(dimethylallyl)adenosine (i(6)A). This is tRNA dimethylallyltransferase from Caulobacter sp. (strain K31).